The sequence spans 187 residues: Putative AgrB-like protein 1 (187 aa).

Transmembrane regions (helical) follow at residues 29 to 49, 50 to 70, 81 to 98, 103 to 120, and 149 to 169; these read VVIV…IAGI, LGYF…KPFI, CFIA…LVTF, LFSI…IYNK, and ILFL…TITW.

The protein belongs to the AgrB family.

The protein localises to the cell membrane. In terms of biological role, may be involved in the proteolytic processing of a quorum sensing system signal molecule precursor. This is Putative AgrB-like protein 1 from Clostridium perfringens (strain 13 / Type A).